We begin with the raw amino-acid sequence, 303 residues long: Ribosomal protein L11 methyltransferase (303 aa).

Thr-146, Gly-167, Asp-189, and Asn-236 together coordinate S-adenosyl-L-methionine.

This sequence belongs to the methyltransferase superfamily. PrmA family.

The protein localises to the cytoplasm. It carries out the reaction L-lysyl-[protein] + 3 S-adenosyl-L-methionine = N(6),N(6),N(6)-trimethyl-L-lysyl-[protein] + 3 S-adenosyl-L-homocysteine + 3 H(+). Methylates ribosomal protein L11. This is Ribosomal protein L11 methyltransferase from Acinetobacter baylyi (strain ATCC 33305 / BD413 / ADP1).